The chain runs to 366 residues: Phenylalanine--tRNA ligase alpha subunit (366 aa).

Residue E264 participates in Mg(2+) binding.

Belongs to the class-II aminoacyl-tRNA synthetase family. Phe-tRNA synthetase alpha subunit type 1 subfamily. Tetramer of two alpha and two beta subunits. Mg(2+) serves as cofactor.

The protein resides in the cytoplasm. It catalyses the reaction tRNA(Phe) + L-phenylalanine + ATP = L-phenylalanyl-tRNA(Phe) + AMP + diphosphate + H(+). This is Phenylalanine--tRNA ligase alpha subunit from Zymomonas mobilis subsp. mobilis (strain ATCC 31821 / ZM4 / CP4).